The sequence spans 609 residues: Glutamine--fructose-6-phosphate aminotransferase [isomerizing] (609 aa).

Cys-2 acts as the Nucleophile; for GATase activity in catalysis. Residues 2-218 (CGIVGAIAQR…EGDIAEITRR (217 aa)) form the Glutamine amidotransferase type-2 domain. 2 consecutive SIS domains span residues 286 to 426 (ADEL…LKGL) and 458 to 599 (LAED…VDQP). The active-site For Fru-6P isomerization activity is the Lys-604.

In terms of assembly, homodimer.

It localises to the cytoplasm. The catalysed reaction is D-fructose 6-phosphate + L-glutamine = D-glucosamine 6-phosphate + L-glutamate. Functionally, catalyzes the first step in hexosamine metabolism, converting fructose-6P into glucosamine-6P using glutamine as a nitrogen source. The polypeptide is Glutamine--fructose-6-phosphate aminotransferase [isomerizing] (Salmonella paratyphi A (strain ATCC 9150 / SARB42)).